A 358-amino-acid chain; its full sequence is B3 domain-containing protein Os12g0592300 (358 aa).

Positions 25–122 form a DNA-binding region, TF-B3 1; the sequence is RIRFFRLMTG…SFDVLIFDAS (98 aa). Positions 148 to 215 are disordered; it reads YHLSDSEDTS…EKSDDDDEHA (68 aa). The segment covering 156-181 has biased composition (polar residues); that stretch reads TSTPSTFLVGSPHKASTSKKLNGKTK. Over residues 203–215 the composition is skewed to acidic residues; that stretch reads IEEEKSDDDDEHA. The segment at residues 252 to 350 is a DNA-binding region (TF-B3 2); it reads FVTVLQAPQI…TMTVHVIGKV (99 aa).

The protein resides in the nucleus. The polypeptide is B3 domain-containing protein Os12g0592300 (Oryza sativa subsp. japonica (Rice)).